Consider the following 408-residue polypeptide: Ribosomal RNA large subunit methyltransferase DR_0049 (408 aa).

It belongs to the methyltransferase superfamily.

The enzyme catalyses cytidine(2499) in 23S rRNA + S-adenosyl-L-methionine = 5-methylcytidine(2499) in 23S rRNA + S-adenosyl-L-homocysteine + H(+). Its function is as follows. Specifically methylates the cytosine at position 2499 (m5C2499) of 23S rRNA. This is Ribosomal RNA large subunit methyltransferase DR_0049 from Deinococcus radiodurans (strain ATCC 13939 / DSM 20539 / JCM 16871 / CCUG 27074 / LMG 4051 / NBRC 15346 / NCIMB 9279 / VKM B-1422 / R1).